Consider the following 711-residue polypeptide: Mitochondrial intermediate peptidase (711 aa).

The transit peptide at 1-33 (MLLAAGARYARRLCGRGAAAALQGRTGRSCARD) directs the protein to the mitochondrion. Lys124 is modified (N6-acetyllysine). His493 is a Zn(2+) binding site. Glu494 is an active-site residue. Zn(2+) is bound by residues His497 and His500.

Belongs to the peptidase M3 family. In terms of assembly, monomer. Zn(2+) serves as cofactor.

Its subcellular location is the mitochondrion matrix. The enzyme catalyses Release of an N-terminal octapeptide as second stage of processing of some proteins imported into the mitochondrion.. With respect to regulation, activity is divalent cation-dependent. It is stimulated by manganese, magnesium or calcium ions and reversibly inhibited by zinc, cobalt and iron. In terms of biological role, cleaves proteins, imported into the mitochondrion, to their mature size. This chain is Mitochondrial intermediate peptidase (Mipep), found in Mus musculus (Mouse).